Reading from the N-terminus, the 59-residue chain is Large ribosomal subunit protein uL30 (59 aa).

This sequence belongs to the universal ribosomal protein uL30 family. In terms of assembly, part of the 50S ribosomal subunit.

This Geotalea uraniireducens (strain Rf4) (Geobacter uraniireducens) protein is Large ribosomal subunit protein uL30.